Reading from the N-terminus, the 174-residue chain is RNA pyrophosphohydrolase (174 aa).

A Nudix hydrolase domain is found at 6–149 (GFRANVGIII…KRDVYRKVMK (144 aa)). Positions 38 to 59 (GGVDDGESAEEAMYRELYEEVG) match the Nudix box motif.

Belongs to the Nudix hydrolase family. RppH subfamily. It depends on a divalent metal cation as a cofactor.

In terms of biological role, accelerates the degradation of transcripts by removing pyrophosphate from the 5'-end of triphosphorylated RNA, leading to a more labile monophosphorylated state that can stimulate subsequent ribonuclease cleavage. This chain is RNA pyrophosphohydrolase, found in Shewanella sp. (strain ANA-3).